A 161-amino-acid chain; its full sequence is Large ribosomal subunit protein mL50 (161 aa).

The disordered stretch occupies residues 27–51; that stretch reads WGGHSKKEEKEVEENSIIPQEKKEP.

Belongs to the mitochondrion-specific ribosomal protein mL50 family. As to quaternary structure, component of the mitochondrial ribosome large subunit (39S) which comprises a 16S rRNA and about 50 distinct proteins.

It is found in the mitochondrion. In Gallus gallus (Chicken), this protein is Large ribosomal subunit protein mL50 (MRPL50).